The primary structure comprises 623 residues: Chaperone protein HtpG (623 aa).

Residues 1-326 form an a; substrate-binding region; the sequence is MAEEKRQFQA…SQDLPLNVSR (326 aa). Residues 327 to 543 form a b region; the sequence is EMLQHNPVLS…EGEMSMHLEK (217 aa). A c region spans residues 544–623; the sequence is MLRAHNQAPG…VSVMEKGLLG (80 aa).

It belongs to the heat shock protein 90 family. As to quaternary structure, homodimer.

It is found in the cytoplasm. In terms of biological role, molecular chaperone. Has ATPase activity. The protein is Chaperone protein HtpG of Paramagnetospirillum magneticum (strain ATCC 700264 / AMB-1) (Magnetospirillum magneticum).